Consider the following 162-residue polypeptide: ATP synthase subunit b (162 aa).

A helical transmembrane segment spans residues 16–36 (GISGGTIIYQLLMFIILLALL).

This sequence belongs to the ATPase B chain family. F-type ATPases have 2 components, F(1) - the catalytic core - and F(0) - the membrane proton channel. F(1) has five subunits: alpha(3), beta(3), gamma(1), delta(1), epsilon(1). F(0) has three main subunits: a(1), b(2) and c(10-14). The alpha and beta chains form an alternating ring which encloses part of the gamma chain. F(1) is attached to F(0) by a central stalk formed by the gamma and epsilon chains, while a peripheral stalk is formed by the delta and b chains.

The protein resides in the cell membrane. Functionally, f(1)F(0) ATP synthase produces ATP from ADP in the presence of a proton or sodium gradient. F-type ATPases consist of two structural domains, F(1) containing the extramembraneous catalytic core and F(0) containing the membrane proton channel, linked together by a central stalk and a peripheral stalk. During catalysis, ATP synthesis in the catalytic domain of F(1) is coupled via a rotary mechanism of the central stalk subunits to proton translocation. In terms of biological role, component of the F(0) channel, it forms part of the peripheral stalk, linking F(1) to F(0). This is ATP synthase subunit b from Bacillus caldotenax.